The following is a 228-amino-acid chain: 3-oxoadipate CoA-transferase subunit A (228 aa).

25 to 31 (GGFGTAG) contributes to the CoA binding site.

This sequence belongs to the 3-oxoacid CoA-transferase subunit A family. In terms of assembly, heterodimer.

The enzyme catalyses 3-oxoadipate + succinyl-CoA = 3-oxoadipyl-CoA + succinate. It participates in aromatic compound metabolism; beta-ketoadipate pathway; acetyl-CoA and succinyl-CoA from 3-oxoadipate: step 1/2. This Acinetobacter baylyi (strain ATCC 33305 / BD413 / ADP1) protein is 3-oxoadipate CoA-transferase subunit A (pcaI).